The following is a 132-amino-acid chain: Small ribosomal subunit protein uS8c (132 aa).

The protein belongs to the universal ribosomal protein uS8 family. As to quaternary structure, part of the 30S ribosomal subunit.

Its subcellular location is the plastid. The protein resides in the chloroplast. Its function is as follows. One of the primary rRNA binding proteins, it binds directly to 16S rRNA central domain where it helps coordinate assembly of the platform of the 30S subunit. The chain is Small ribosomal subunit protein uS8c (rps8) from Thalassiosira pseudonana (Marine diatom).